The primary structure comprises 180 residues: Cytokinin-beta-glucosidase 3 (180 aa).

In terms of biological role, hydrolyzes cytokinin glucosides thus liberating free cytokinins. The protein is Cytokinin-beta-glucosidase 3 (ROLC3) of Panax ginseng (Korean ginseng).